The sequence spans 706 residues: MEKTFNLTRRDDGIAILTMDVPGETMNTLKAQFGPEISEILAEIKSDSSIRGLVLISGKKDSFVAGADISMLDACKTAGDAKALSQQGHVVFNELEALTIPVVAAIHGACLGGGLELALACHQRVCSDDGKTMLGVPEVQLGLLPGGGGTQRLPRLVGITTALDMMLTGKKIRPKQALKMGLVNDVVPQTILLQTAVEMALAGKRAPKPVKKSLVNQVLEGTSFGRNIIFDQATKQVEKKTQGNYPAPAKIIDCVRQGIAKGMQKGLEVEASHFAELVVSKESEALRSIFFATTEMKKETGAEGASPRKVKKAVILGGGLMGGGIASVTTTKAKIPVRVKDISEKGLSNALAYAYKLLDKGVKRRHMTPAARDNLMALMTTTTEYKGVKDADIVVEAVFEDLALKHQMVKDIERECGEHTIFASNTSSLPISQIAEAATRPENVIGLHYFSPVEKMPLVEVIAHAKTSPETIATTVAFARKQGKTPIVVQDGAGFYVNRILALYMNEAAQLLLEGQSVEHLDKALVKFGFPVGPITLLDEVGIDVGAKISPILEKELGERFKAPAAFDKLLSDDRKGRKNGKGFYQYGASSKKAKAVDESVYGVLGIKPGTNKDAKAVAERCVVQMLNEAVRCLEDGIIASPRDGDIGAIFGIGFPPFLGGPFHYIDTLGAANLVKILESYQSQFGNRFEPCERLKTMAQENAHFF.

Positions 1–188 (MEKTFNLTRR…KMGLVNDVVP (188 aa)) are enoyl-CoA hydratase. Residues 308–706 (RKVKKAVILG…TMAQENAHFF (399 aa)) form a 3-hydroxyacyl-CoA dehydrogenase region.

The protein in the N-terminal section; belongs to the enoyl-CoA hydratase/isomerase family. It in the central section; belongs to the 3-hydroxyacyl-CoA dehydrogenase family. In terms of assembly, heterotetramer of two alpha chains (FadJ) and two beta chains (FadI).

It localises to the cytoplasm. It catalyses the reaction a (3S)-3-hydroxyacyl-CoA = a (2E)-enoyl-CoA + H2O. It carries out the reaction a 4-saturated-(3S)-3-hydroxyacyl-CoA = a (3E)-enoyl-CoA + H2O. The enzyme catalyses a (3S)-3-hydroxyacyl-CoA + NAD(+) = a 3-oxoacyl-CoA + NADH + H(+). The catalysed reaction is (3S)-3-hydroxybutanoyl-CoA = (3R)-3-hydroxybutanoyl-CoA. The protein operates within lipid metabolism; fatty acid beta-oxidation. Functionally, catalyzes the formation of a hydroxyacyl-CoA by addition of water on enoyl-CoA. Also exhibits 3-hydroxyacyl-CoA epimerase and 3-hydroxyacyl-CoA dehydrogenase activities. This is Fatty acid oxidation complex subunit alpha from Shewanella baltica (strain OS185).